The primary structure comprises 192 residues: UPF0301 protein BceJ2315_30870 (192 aa).

The protein belongs to the UPF0301 (AlgH) family.

This is UPF0301 protein BceJ2315_30870 from Burkholderia cenocepacia (strain ATCC BAA-245 / DSM 16553 / LMG 16656 / NCTC 13227 / J2315 / CF5610) (Burkholderia cepacia (strain J2315)).